The primary structure comprises 531 residues: Arginine--tRNA ligase (531 aa).

The short motif at 113 to 123 is the 'HIGH' region element; it reads ANPTGPLHIGH.

It belongs to the class-I aminoacyl-tRNA synthetase family. In terms of assembly, monomer.

It is found in the cytoplasm. It catalyses the reaction tRNA(Arg) + L-arginine + ATP = L-arginyl-tRNA(Arg) + AMP + diphosphate. In Campylobacter lari (strain RM2100 / D67 / ATCC BAA-1060), this protein is Arginine--tRNA ligase.